The chain runs to 328 residues: V-type sodium ATPase subunit C (328 aa).

This sequence belongs to the V-ATPase V0D/AC39 subunit family.

Functionally, involved in ATP-driven sodium extrusion. This Enterococcus hirae (strain ATCC 9790 / DSM 20160 / JCM 8729 / LMG 6399 / NBRC 3181 / NCIMB 6459 / NCDO 1258 / NCTC 12367 / WDCM 00089 / R) protein is V-type sodium ATPase subunit C (ntpC).